We begin with the raw amino-acid sequence, 389 residues long: tRNA(Met) cytidine acetate ligase (389 aa).

ATP contacts are provided by residues 8 to 21 (IAEF…HEYL), glycine 97, asparagine 153, and arginine 176.

Belongs to the TmcAL family.

It localises to the cytoplasm. The enzyme catalyses cytidine(34) in elongator tRNA(Met) + acetate + ATP = N(4)-acetylcytidine(34) in elongator tRNA(Met) + AMP + diphosphate. In terms of biological role, catalyzes the formation of N(4)-acetylcytidine (ac(4)C) at the wobble position of elongator tRNA(Met), using acetate and ATP as substrates. First activates an acetate ion to form acetyladenylate (Ac-AMP) and then transfers the acetyl group to tRNA to form ac(4)C34. This is tRNA(Met) cytidine acetate ligase from Lactococcus lactis subsp. lactis (strain IL1403) (Streptococcus lactis).